Here is a 574-residue protein sequence, read N- to C-terminus: Acyloxyacyl hydrolase (574 aa).

An N-terminal signal peptide occupies residues Met1 to Ala22. A propeptide spanning residues Ser23 to Ser33 is cleaved from the precursor. Positions His36–Ala117 constitute a Saposin B-type domain. Residues Gly37–Cys69 are important for enzyme activity, localization to cytoplasmic vesicles, and protein stability. Disulfide bonds link Cys40/Cys113, Cys43/Cys107, Cys69/Cys82, Cys122/Cys452, Cys159/Cys168, Cys205/Cys229, Cys248/Cys328, and Cys375/Cys458. The N-linked (GlcNAc...) asparagine glycan is linked to Asn58. The interval Glu172–Lys176 is lipopolysaccharide binding. Ca(2+) is bound by residues Asp183, Asp185, Asp187, His189, Asp204, Asn206, Asp207, Asp209, Val212, Asp222, Asp226, Asn228, Asn230, Ile232, and Glu244. An N-linked (GlcNAc...) asparagine glycan is attached at Asn206. Ser262 is an active-site residue. 2 N-linked (GlcNAc...) asparagine glycosylation sites follow: Asn408 and Asn465.

As to quaternary structure, heterodimer of the large and small subunits; disulfide-linked. Ca(2+) is required as a cofactor. In terms of processing, cleaved into a large and a small subunit. Post-translationally, the small subunit is N-glycosylated. As to expression, detected in peritoneal macrophages (at protein level). Strongly expressed in kidney cortex, where it may be produced by proximal tubule cells. In liver, expressed at high levels in Kupffer cells. Expressed by dendritic cells. Detected at low levels in alveolar macrophages.

The protein resides in the secreted. It localises to the cytoplasmic vesicle. The enzyme catalyses a 3-(acyloxy)acyl derivative of bacterial toxin + H2O = a 3-hydroxyacyl derivative of bacterial toxin + a fatty acid + H(+). Functionally, removes the secondary (acyloxyacyl-linked) fatty acyl chains from the lipid A region of bacterial lipopolysaccharides (LPS). By breaking down LPS, terminates the host response to bacterial infection and prevents prolonged and damaging inflammatory responses. In peritoneal macrophages, seems to be important for recovery from a state of immune tolerance following infection by Gram-negative bacteria. In Mus musculus (Mouse), this protein is Acyloxyacyl hydrolase.